Here is a 460-residue protein sequence, read N- to C-terminus: uncharacterized protein (460 aa).

Residues 5 to 63 (TWHQGELIEVAIADLSDTGDGVGRFAERVVFVPDTVPGDRVLVRLLHVKPNYAHGKLHQ) form the TRAM domain. Positions 76, 82, 85, and 164 each coordinate [4Fe-4S] cluster. 4 residues coordinate S-adenosyl-L-methionine: Gln288, Tyr317, Glu338, and Asp383. Cys410 functions as the Nucleophile in the catalytic mechanism.

Belongs to the class I-like SAM-binding methyltransferase superfamily. RNA M5U methyltransferase family.

This is an uncharacterized protein from Nostoc sp. (strain PCC 7120 / SAG 25.82 / UTEX 2576).